Reading from the N-terminus, the 139-residue chain is MAERTFSIIKPDAVERNLSGAILKMIQDSGLKVVAMKMIHLTRSQAEGFYAVHRERPFFDSLVTYMCSGPVVCSVLEGDNAIQRYRDLMGATNPANAAEGTIRKTYAVSIEANSVHGSDAPETAAYEIAYFFNALEMVG.

6 residues coordinate ATP: Lys-10, Phe-58, Arg-86, Thr-92, Arg-103, and Asn-113. The active-site Pros-phosphohistidine intermediate is His-116.

The protein belongs to the NDK family. Homotetramer. Requires Mg(2+) as cofactor.

The protein localises to the cytoplasm. It carries out the reaction a 2'-deoxyribonucleoside 5'-diphosphate + ATP = a 2'-deoxyribonucleoside 5'-triphosphate + ADP. The catalysed reaction is a ribonucleoside 5'-diphosphate + ATP = a ribonucleoside 5'-triphosphate + ADP. Its function is as follows. Major role in the synthesis of nucleoside triphosphates other than ATP. The ATP gamma phosphate is transferred to the NDP beta phosphate via a ping-pong mechanism, using a phosphorylated active-site intermediate. The sequence is that of Nucleoside diphosphate kinase from Nitratidesulfovibrio vulgaris (strain DSM 19637 / Miyazaki F) (Desulfovibrio vulgaris).